A 276-amino-acid polypeptide reads, in one-letter code: 2-dehydro-3-deoxyphosphooctonate aldolase (276 aa).

The protein belongs to the KdsA family.

Its subcellular location is the cytoplasm. The catalysed reaction is D-arabinose 5-phosphate + phosphoenolpyruvate + H2O = 3-deoxy-alpha-D-manno-2-octulosonate-8-phosphate + phosphate. Its pathway is carbohydrate biosynthesis; 3-deoxy-D-manno-octulosonate biosynthesis; 3-deoxy-D-manno-octulosonate from D-ribulose 5-phosphate: step 2/3. The protein operates within bacterial outer membrane biogenesis; lipopolysaccharide biosynthesis. This is 2-dehydro-3-deoxyphosphooctonate aldolase from Xanthomonas euvesicatoria pv. vesicatoria (strain 85-10) (Xanthomonas campestris pv. vesicatoria).